Consider the following 396-residue polypeptide: Adenosine deaminase 1 (396 aa).

The tract at residues 1–26 (MTSRSTEKSAAANPAAVSKTPSPDRI) is disordered. Residues H35 and H37 each contribute to the Zn(2+) site. Residues H37, D39, and G197 each coordinate substrate. H224 is a binding site for Zn(2+). E227 acts as the Proton donor in catalysis. D316 contributes to the Zn(2+) binding site.

It belongs to the metallo-dependent hydrolases superfamily. Adenosine and AMP deaminases family. Adenosine deaminase subfamily. In terms of assembly, homotetramer. Zn(2+) is required as a cofactor.

The catalysed reaction is adenosine + H2O + H(+) = inosine + NH4(+). It catalyses the reaction 2'-deoxyadenosine + H2O + H(+) = 2'-deoxyinosine + NH4(+). Its activity is regulated as follows. Coformycin and 2'-deoxycoformycin, whose structures mimic the transition state of the deamination reaction, are potent competitive inhibitors. In terms of biological role, catalyzes the hydrolytic deamination of adenosine and 2-deoxyadenosine. The sequence is that of Adenosine deaminase 1 from Streptomyces coelicolor (strain ATCC BAA-471 / A3(2) / M145).